Here is a 290-residue protein sequence, read N- to C-terminus: Arylamine N-acetyltransferase 2 (290 aa).

Catalysis depends on Cys68, which acts as the Acyl-thioester intermediate. 2 residues coordinate CoA: Thr103 and Gly104. Residue 106–107 (VH) coordinates substrate. Active-site residues include His107 and Asp122. Residues Tyr208, Thr214, and Ser287 each coordinate CoA.

It belongs to the arylamine N-acetyltransferase family.

It localises to the cytoplasm. The enzyme catalyses an arylamine + acetyl-CoA = an N-acetylarylamine + CoA. The catalysed reaction is an N-hydroxyarylamine + acetyl-CoA = an N-acetoxyarylamine + CoA. Its function is as follows. Catalyzes the N- or O-acetylation of various arylamine and heterocyclic amine substrates. Participates in the detoxification of a plethora of hydrazine and arylamine drugs, and is able to bioactivate several known carcinogens. This Homo sapiens (Human) protein is Arylamine N-acetyltransferase 2 (NAT2).